The chain runs to 254 residues: Ciliary microtubule associated protein 1A (254 aa).

STPGR repeat units lie at residues 180 to 205 (PGPA…MAAR) and 216 to 241 (PGPG…FGIK). The disordered stretch occupies residues 207–226 (EPPGDKTLKPGPGAHSPEKV).

The protein belongs to the CIMAP family. Microtubule inner protein component of sperm flagellar doublet microtubules.

It is found in the cytoplasm. The protein resides in the cytoskeleton. The protein localises to the flagellum axoneme. Functionally, outer dense fibers are filamentous structures located on the outside of the axoneme in the midpiece and principal piece of the mammalian sperm tail. May help to maintain the passive elastic structures and elastic recoil of the sperm tail. The sequence is that of Ciliary microtubule associated protein 1A (CIMAP1A) from Bos taurus (Bovine).